The primary structure comprises 259 residues: Archaerhodopsin-2 (259 aa).

Positions 1 to 6 are excised as a propeptide; sequence MDPIAL. Q7 is modified (pyrrolidone carboxylic acid). Residues 7–18 are Extracellular-facing; that stretch reads QAGFDLLNDGRP. A helical transmembrane segment spans residues 19 to 40; the sequence is ETLWLGIGTLLMLIGTFYFIAR. Topologically, residues 41 to 49 are cytoplasmic; that stretch reads GWGVTDKEA. The chain crosses the membrane as a helical span at residues 50–71; that stretch reads REYYAITILVPGIASAAYLAMF. Residues 72–90 lie on the Extracellular side of the membrane; the sequence is FGIGVTEVELASGTVLDIY. A helical membrane pass occupies residues 91-112; it reads YARYADWLFTTPLLLLDLALLA. Over 113 to 115 the chain is Cytoplasmic; it reads KVD. Residues 116–138 traverse the membrane as a helical segment; it reads RVTIGTLIGVDALMIVTGLIGAL. The Extracellular segment spans residues 139-142; it reads SKTP. Residues 143 to 171 traverse the membrane as a helical segment; it reads LARYTWWLFSTIAFLFVLYYLLTSLRSAA. Residues 172 to 174 lie on the Cytoplasmic side of the membrane; the sequence is AKR. The helical transmembrane segment at 175-203 threads the bilayer; that stretch reads SEEVRSTFNTLTALVAVLWTAYPILWIVG. Over 204–211 the chain is Extracellular; that stretch reads TEGAGVVG. A helical membrane pass occupies residues 212 to 244; sequence LGIETLAFMVLDVTAKVGFGFVLLRSRAILGET. K227 bears the N6-(retinylidene)lysine mark. Residues 245–259 lie on the Cytoplasmic side of the membrane; it reads EAPEPSAGADASAAD.

This sequence belongs to the archaeal/bacterial/fungal opsin family.

Its subcellular location is the cell membrane. Functionally, light-driven proton pump. It may interact with bacterioruberin in the claret membrane. This is Archaerhodopsin-2 from Halobacterium sp. (strain aus-2).